We begin with the raw amino-acid sequence, 279 residues long: Proteasome subunit alpha type-1 (279 aa).

Residue Tyr103 is modified to Phosphotyrosine. Basic and acidic residues predominate over residues 235 to 249; the sequence is HVAIAKENDNDTPRN. Residues 235–279 form a disordered region; it reads HVAIAKENDNDTPRNDDDDDRPSPPEEPAAGPRDPEVLVATEQRP.

It belongs to the peptidase T1A family. The 26S proteasome consists of a 20S proteasome core and two 19S regulatory subunits. The 20S proteasome core is composed of 28 subunits that are arranged in four stacked rings, resulting in a barrel-shaped structure. The two end rings are each formed by seven alpha subunits, and the two central rings are each formed by seven beta subunits. The catalytic chamber with the active sites is on the inside of the barrel. Interacts with PI31.

Its subcellular location is the cytoplasm. The protein localises to the nucleus. The proteasome is a multicatalytic proteinase complex which is characterized by its ability to cleave peptides with Arg, Phe, Tyr, Leu, and Glu adjacent to the leaving group at neutral or slightly basic pH. The proteasome has an ATP-dependent proteolytic activity. The protein is Proteasome subunit alpha type-1 (Prosalpha6) of Drosophila melanogaster (Fruit fly).